The chain runs to 206 residues: Probable GTP-binding protein EngB (206 aa).

An EngB-type G domain is found at Asp7 to Asp195. GTP-binding positions include Gly15–Ser22, Gly41–Ser45, Asp60–Gly63, Asn140–Asp143, and Ile175–Ala177. Residues Ser22 and Thr43 each contribute to the Mg(2+) site.

It belongs to the TRAFAC class TrmE-Era-EngA-EngB-Septin-like GTPase superfamily. EngB GTPase family. Mg(2+) serves as cofactor.

Functionally, necessary for normal cell division and for the maintenance of normal septation. The protein is Probable GTP-binding protein EngB of Haloquadratum walsbyi (strain DSM 16790 / HBSQ001).